The sequence spans 515 residues: Monocarboxylate transporter 10 (515 aa).

Positions 1 to 48 (MVLSQEEPDSARGTSEAQPLGPAPTGAAPPPGPGPSDSPEAAVEKVEV) are disordered. The Cytoplasmic portion of the chain corresponds to 1–66 (MVLSQEEPDS…EPHEPPEPPE (66 aa)). Residues 17 to 26 (AQPLGPAPTG) are compositionally biased toward low complexity. Over residues 27–36 (AAPPPGPGPS) the composition is skewed to pro residues. The chain crosses the membrane as a helical span at residues 67-87 (GGWGWLVMLAAMWCNGSVFGI). The Extracellular portion of the chain corresponds to 88-114 (QNACGVLFVSMLETFGSKDDDKMVFKT). The helical transmembrane segment at 115–135 (AWVGSLSMGMIFFCCPIVSVF) threads the bilayer. Over 136–144 (TDLFGCRKT) the chain is Cytoplasmic. Residues 145–165 (AVVGAAVGFVGLMSSSFVSSI) traverse the membrane as a helical segment. Residues 166–171 (EPLYLT) are Extracellular-facing. A helical membrane pass occupies residues 172 to 192 (YGIIFACGCSFAYQPSLVILG). The Cytoplasmic segment spans residues 193–200 (HYFKKRLG). A helical transmembrane segment spans residues 201–221 (LVNGIVTAGSSVFTILLPLLL). The Extracellular segment spans residues 222–228 (RVLIDSV). A helical transmembrane segment spans residues 229–249 (GLFYTLRVLCIFMFVLFLAGF). The Cytoplasmic segment spans residues 250–291 (TYRPLATSTKDKESGGSGSSLFSRKKFSPPKKIFNFAIFKVT). A Phosphoserine modification is found at Ser263. Residues 292-312 (AYAVWAVGIPLALFGYFVPYV) form a helical membrane-spanning segment. Residues 313–329 (HLMKHVNERFQDEKNKE) are Extracellular-facing. The helical transmembrane segment at 330–350 (VVLMCIGVTSGVGRLLFGRIA) threads the bilayer. Asp351 is a topological domain (cytoplasmic). A helical transmembrane segment spans residues 352–372 (YVPGVKKVYLQVLSFFFIGLM). At 373-396 (SMMIPLCSIFGALIAVCLIMGLFD) the chain is on the extracellular side. A helical transmembrane segment spans residues 397–417 (GCFISIMAPIAFELVGAQDVS). Residues 418-419 (QA) are Cytoplasmic-facing. Residues 420–440 (IGFLLGFMSIPMTVGPPIAGL) form a helical membrane-spanning segment. Residues 441 to 451 (LRDKLGSYDVA) lie on the Extracellular side of the membrane. Residues 452-472 (FYLAGVPPLIGGAVLCFIPWI) traverse the membrane as a helical segment. Topologically, residues 473 to 515 (HSKKQREISKTTGKEKMEKMLENQNSLLSSSSGMFKKESDSII) are cytoplasmic. Residues Ser498, Ser501, Ser503, and Ser504 each carry the phosphoserine modification.

It belongs to the major facilitator superfamily. Monocarboxylate porter (TC 2.A.1.13) family. Not N-glycosylated. In terms of tissue distribution, strongly expressed in kidney and skeletal muscle and at lower level in placenta and heart.

It localises to the cell membrane. The protein localises to the basolateral cell membrane. It catalyses the reaction 3,3',5-triiodo-L-thyronine(out) = 3,3',5-triiodo-L-thyronine(in). The catalysed reaction is L-thyroxine(out) = L-thyroxine(in). The enzyme catalyses L-tryptophan(in) = L-tryptophan(out). It carries out the reaction L-tyrosine(in) = L-tyrosine(out). It catalyses the reaction L-phenylalanine(in) = L-phenylalanine(out). Its function is as follows. Sodium- and proton-independent thyroid hormones and aromatic acids transporter. Mediates both uptake and efflux of 3,5,3'-triiodothyronine (T3) and 3,5,3',5'-tetraiodothyronine (T4) with high affinity, suggesting a role in the homeostasis of thyroid hormone levels. Responsible for low affinity bidirectional transport of the aromatic amino acids, such as phenylalanine, tyrosine, tryptophan and L-3,4-dihydroxyphenylalanine (L-dopa). Plays an important role in homeostasis of aromatic amino acids. This chain is Monocarboxylate transporter 10 (SLC16A10), found in Homo sapiens (Human).